The following is an 871-amino-acid chain: MKSQDIRKQFLEFFKSKSHTIVPSAPMVLKDDPTLMFTNAGMVQFKEFFLGNSVAKSNRVTDTQKCLRVSGKHNDLEEVGHDTYHHTMFEMLGNWSFGDYFKEEAISWAWELLTEVYKISPENLYVSVFEGSDDRDDLGLDTEALELWKKIVPEERIIYGNKKDNFWEMGDQGPCGPCSEIHIDIRSEEEKAKTPGRDLVNMDHPQVVEIWNLVFMQYNRKANGDLEELPAKHIDTGMGFERLCMVLQNTQSNYDTDVFTPLVGEIEEITGVTYGKSEENNIAMRVIADHVRAVAFSIADGQLPSNTGAGYVIRRILRRAIRYGFTFLNTKEPFIYKLVPVLSGQMGATFQELKSQQNLIENVIREEEASFLRTLDQGLILLENLMKESKDKTISGEKAFELYDTFGFPIDLTALILKENGYDLDEKGFEAELKKQKDRSREATAVSAGDWIELNPVDEESFVGYDKLEADAKIARYRKVESKKKGEMFQVVLNKTPFYPEGGGQVGDKGILMSSDGEVVDVVDTKKENNQIIHFTKNLPKNTEAEFKAIVNKTERYNTASNHTATHLLHQALRSILGTHVEQKGSMVQSGYLRFDFSHFSKVTGEELEKVENFVNARIREQLSLDEQRNISYQEAIDQGAIALFGEKYGDSVRAIRFGDSMELCGGIHVKNTSDIWHFKISGESAVASGIRRIEAITGEAAMKYFEEQTNILEEIKSGLKNSNDPVKAINNLQEENINLKRQIESLLKDKAKNLKSKLKHEVKSINGVNFLSKKVDLDAAGIKDLAFQLGEEIDDLFILFGAEQHGKALLSCYISKELVKGKDLNAGQIVRELGKYIQGGGGGQPFFATAGGKNPDGLNEALQKAESFIK.

Residues H563, H567, C665, and H669 each contribute to the Zn(2+) site.

Belongs to the class-II aminoacyl-tRNA synthetase family. It depends on Zn(2+) as a cofactor.

The protein localises to the cytoplasm. The catalysed reaction is tRNA(Ala) + L-alanine + ATP = L-alanyl-tRNA(Ala) + AMP + diphosphate. Its function is as follows. Catalyzes the attachment of alanine to tRNA(Ala) in a two-step reaction: alanine is first activated by ATP to form Ala-AMP and then transferred to the acceptor end of tRNA(Ala). Also edits incorrectly charged Ser-tRNA(Ala) and Gly-tRNA(Ala) via its editing domain. The polypeptide is Alanine--tRNA ligase (Christiangramia forsetii (strain DSM 17595 / CGMCC 1.15422 / KT0803) (Gramella forsetii)).